Reading from the N-terminus, the 669-residue chain is UvrABC system protein B (669 aa).

The Helicase ATP-binding domain occupies 26–414 (EGLEDGLAHQ…SGDVVEQVVR (389 aa)). 39–46 (GVTGSGKT) lines the ATP pocket. The short motif at 92–115 (YYDYYQPEAYVPSSDTFIEKDASV) is the Beta-hairpin element. One can recognise a Helicase C-terminal domain in the interval 431–597 (QVDDLLSEIR…GLNKKINDIL (167 aa)). The UVR domain occupies 629-664 (ESKIRELEAKMYQHAQDLEFEQAASVRDQVQALREQ).

It belongs to the UvrB family. As to quaternary structure, forms a heterotetramer with UvrA during the search for lesions. Interacts with UvrC in an incision complex.

Its subcellular location is the cytoplasm. Its function is as follows. The UvrABC repair system catalyzes the recognition and processing of DNA lesions. A damage recognition complex composed of 2 UvrA and 2 UvrB subunits scans DNA for abnormalities. Upon binding of the UvrA(2)B(2) complex to a putative damaged site, the DNA wraps around one UvrB monomer. DNA wrap is dependent on ATP binding by UvrB and probably causes local melting of the DNA helix, facilitating insertion of UvrB beta-hairpin between the DNA strands. Then UvrB probes one DNA strand for the presence of a lesion. If a lesion is found the UvrA subunits dissociate and the UvrB-DNA preincision complex is formed. This complex is subsequently bound by UvrC and the second UvrB is released. If no lesion is found, the DNA wraps around the other UvrB subunit that will check the other stand for damage. This is UvrABC system protein B from Photorhabdus laumondii subsp. laumondii (strain DSM 15139 / CIP 105565 / TT01) (Photorhabdus luminescens subsp. laumondii).